A 684-amino-acid chain; its full sequence is DNA ligase (684 aa).

Residues 48–52, 97–98, and Glu-129 contribute to the NAD(+) site; these read DYEYD and SL. Lys-131 acts as the N6-AMP-lysine intermediate in catalysis. Residues Arg-152, Glu-189, Lys-310, and Lys-334 each coordinate NAD(+). Positions 429, 432, 447, and 452 each coordinate Zn(2+). The BRCT domain occupies 609 to 684; it reads AQEGSLSGMS…ISWEELQAMI (76 aa).

This sequence belongs to the NAD-dependent DNA ligase family. LigA subfamily. The cofactor is Mg(2+). Mn(2+) is required as a cofactor.

It catalyses the reaction NAD(+) + (deoxyribonucleotide)n-3'-hydroxyl + 5'-phospho-(deoxyribonucleotide)m = (deoxyribonucleotide)n+m + AMP + beta-nicotinamide D-nucleotide.. Its function is as follows. DNA ligase that catalyzes the formation of phosphodiester linkages between 5'-phosphoryl and 3'-hydroxyl groups in double-stranded DNA using NAD as a coenzyme and as the energy source for the reaction. It is essential for DNA replication and repair of damaged DNA. The protein is DNA ligase of Bdellovibrio bacteriovorus (strain ATCC 15356 / DSM 50701 / NCIMB 9529 / HD100).